Consider the following 113-residue polypeptide: Ig heavy chain V-III region ABE-47N (113 aa).

Residues 1-113 (EVKLEESGGG…YWGQGTLVTV (113 aa)) form the Ig-like domain. A disulfide bond links Cys-22 and Cys-98.

The protein is Ig heavy chain V-III region ABE-47N of Mus musculus (Mouse).